A 446-amino-acid chain; its full sequence is MATFKEHLQERSAHSIGRVNAHGYEDSNFLLTKLTENKMSCPMTISMLAPTLGTVGRINEESRTRRNAGYPINFEFDFGPVIEFLNMRLNNAGDPFMECNYGIHSKKFEIAVLDWFARLWELPKDQYWGYVTSGGTEGNMHGLLVGRELFPEGIIYTSCDSHYSIFKAAKMYRVQCIKIDTLFSGEMDYADFRRKLLQNTRSPAIVNVNIGTTMKGAVDDLDEVVMILENCGFANRFYIHCDSALVGLMMPFIKQAPKLTFKKPIGSICISGHKFIGCPIPCGVLITRLMDINHVMSTNIEYISSNDTTIAGSRNGHAPIFLWYALKRIGYNGLCKTVENCLKNAQYLALRLREMGVSVFLNALSITVVFERPNDETFVRKWQLACQGKIAHVVVMPNVSLERINMFLEEFTKSRIALHQDKCVAGDVSQENCLCSLHLDRKKEAV.

Residue His162 coordinates substrate. Lys274 carries the N6-(pyridoxal phosphate)lysine modification.

The protein belongs to the group II decarboxylase family. The cofactor is pyridoxal 5'-phosphate.

It catalyses the reaction L-serine + H(+) = ethanolamine + CO2. In terms of biological role, catalyzes the biosynthesis of ethanolamine from serine. Decarboxylation of free serine is the major source of ethanolamine production in plants and ethanolamine metabolism is crucial for the synthesis of choline, phosphatidylethanolamine (PE) and phosphatidylcholine (PC), and thus for plant growth. This is Serine decarboxylase 3 from Oryza sativa subsp. japonica (Rice).